We begin with the raw amino-acid sequence, 56 residues long: Large ribosomal subunit protein eL20 (56 aa).

Residues 1–24 (MSTYTVRGSFPARDGPQQFEKEVE) are disordered.

Belongs to the eukaryotic ribosomal protein eL20 family. As to quaternary structure, part of the 50S ribosomal subunit. Binds 23S rRNA.

The chain is Large ribosomal subunit protein eL20 from Haloarcula marismortui (strain ATCC 43049 / DSM 3752 / JCM 8966 / VKM B-1809) (Halobacterium marismortui).